A 541-amino-acid polypeptide reads, in one-letter code: Light-independent protochlorophyllide reductase subunit B (541 aa).

Position 36 (D36) interacts with [4Fe-4S] cluster. The active-site Proton donor is the D290. Substrate is bound at residue 425–426; that stretch reads GL.

The protein belongs to the ChlB/BchB/BchZ family. Protochlorophyllide reductase is composed of three subunits; ChlL, ChlN and ChlB. Forms a heterotetramer of two ChlB and two ChlN subunits. [4Fe-4S] cluster serves as cofactor.

The enzyme catalyses chlorophyllide a + oxidized 2[4Fe-4S]-[ferredoxin] + 2 ADP + 2 phosphate = protochlorophyllide a + reduced 2[4Fe-4S]-[ferredoxin] + 2 ATP + 2 H2O. It participates in porphyrin-containing compound metabolism; chlorophyll biosynthesis (light-independent). In terms of biological role, component of the dark-operative protochlorophyllide reductase (DPOR) that uses Mg-ATP and reduced ferredoxin to reduce ring D of protochlorophyllide (Pchlide) to form chlorophyllide a (Chlide). This reaction is light-independent. The NB-protein (ChlN-ChlB) is the catalytic component of the complex. The protein is Light-independent protochlorophyllide reductase subunit B of Synechococcus sp. (strain CC9902).